A 326-amino-acid polypeptide reads, in one-letter code: Protein LEG1 homolog (326 aa).

Residues Met-1 to Ser-22 form the signal peptide. Asn-58, Asn-85, Asn-165, Asn-226, and Asn-245 each carry an N-linked (GlcNAc...) asparagine glycan.

This sequence belongs to the LEG1 family.

Its subcellular location is the secreted. This is Protein LEG1 homolog from Dictyostelium discoideum (Social amoeba).